Here is a 32-residue protein sequence, read N- to C-terminus: Photosystem II reaction center protein Psb30 (32 aa).

Residues 3–23 (IVIVQLGSLALITLAGPIIIV) form a helical membrane-spanning segment.

The protein belongs to the Psb30/Ycf12 family. PSII is composed of 1 copy each of membrane proteins PsbA, PsbB, PsbC, PsbD, PsbE, PsbF, PsbH, PsbI, PsbJ, PsbK, PsbL, PsbM, PsbT, PsbY, PsbZ, Psb30/Ycf12, peripheral proteins of the oxygen-evolving complex and a large number of cofactors. It forms dimeric complexes.

The protein resides in the plastid. The protein localises to the chloroplast thylakoid membrane. In terms of biological role, a core subunit of photosystem II (PSII), probably helps stabilize the reaction center. The sequence is that of Photosystem II reaction center protein Psb30 from Euglena viridis (Cercaria viridis).